A 951-amino-acid chain; its full sequence is Bifunctional glutamine synthetase adenylyltransferase/adenylyl-removing enzyme (951 aa).

The interval 1–445 (MSILPLPALP…VFDELIGDDA (445 aa)) is adenylyl removase. Residues 454-951 (HSSYSSLWQD…VSWNKWLMGA (498 aa)) form an adenylyl transferase region.

This sequence belongs to the GlnE family. Requires Mg(2+) as cofactor.

The catalysed reaction is [glutamine synthetase]-O(4)-(5'-adenylyl)-L-tyrosine + phosphate = [glutamine synthetase]-L-tyrosine + ADP. It carries out the reaction [glutamine synthetase]-L-tyrosine + ATP = [glutamine synthetase]-O(4)-(5'-adenylyl)-L-tyrosine + diphosphate. Functionally, involved in the regulation of glutamine synthetase GlnA, a key enzyme in the process to assimilate ammonia. When cellular nitrogen levels are high, the C-terminal adenylyl transferase (AT) inactivates GlnA by covalent transfer of an adenylyl group from ATP to specific tyrosine residue of GlnA, thus reducing its activity. Conversely, when nitrogen levels are low, the N-terminal adenylyl removase (AR) activates GlnA by removing the adenylyl group by phosphorolysis, increasing its activity. The regulatory region of GlnE binds the signal transduction protein PII (GlnB) which indicates the nitrogen status of the cell. The polypeptide is Bifunctional glutamine synthetase adenylyltransferase/adenylyl-removing enzyme (Pectobacterium atrosepticum (strain SCRI 1043 / ATCC BAA-672) (Erwinia carotovora subsp. atroseptica)).